A 459-amino-acid chain; its full sequence is Ammonium transporter Rh type B (459 aa).

Over 1–10 (MAESTNLRLR) the chain is Cytoplasmic. A helical transmembrane segment spans residues 11–31 (LPLICIILEVILIILFGVLVE). The Extracellular segment spans residues 32–58 (YNDDTDAKKWNKNNSTDPATNEFYYRY). N45 carries N-linked (GlcNAc...) asparagine glycosylation. The chain crosses the membrane as a helical span at residues 59 to 79 (PSFQDVHVMIFVGFGFLMTFL). Residues 80–87 (QRYGFSSM) lie on the Cytoplasmic side of the membrane. A helical membrane pass occupies residues 88-108 (GFNFLIAAFSLQWATLMQGFF). Over 109-121 (HGMHHGKIHVGVT) the chain is Extracellular. Residues 122–142 (SMINADFCTGAVLISFGAVLG) traverse the membrane as a helical segment. Topologically, residues 143-149 (KTSPVQL) are cytoplasmic. Residues 150–170 (LVMAILEVTLFAVNEYILLSI) traverse the membrane as a helical segment. At 171–176 (LGANDA) the chain is on the extracellular side. The chain crosses the membrane as a helical span at residues 177 to 197 (GGSMTIHTFGAYFGLMVTRIL). Residues 198-216 (HRPNLDKSKHKNSSVYHSD) lie on the Cytoplasmic side of the membrane. The chain crosses the membrane as a helical span at residues 217–237 (LFAMIGTIFLWMFWPSFNSAI). Topologically, residues 238–248 (TQYGDPQHRTA) are extracellular. A helical membrane pass occupies residues 249-269 (ANTYYSLAACTLATFGFSSLV). At 270–274 (NPEGK) the chain is on the cytoplasmic side. A helical transmembrane segment spans residues 275 to 295 (LDMVHIQNAALAGGVAVGTAG). Residue E296 is a topological domain, extracellular. A helical membrane pass occupies residues 297–317 (MMLTPFGSMIVGFLAGTISVL). At 318-340 (GYKYLTPFMESKLKIQDTCGIHN) the chain is on the cytoplasmic side. Residues 341–361 (LHGMPGILGAIVGAVTAALAS) traverse the membrane as a helical segment. The Extracellular segment spans residues 362-392 (RDVYGNGLDKVFLEAADNSQWSAQTKGGFQA). Residues 393 to 413 (ISLAVTLGIALIGGLITGFLL) traverse the membrane as a helical segment. The Cytoplasmic segment spans residues 414–459 (KLPIYGTPPDTQCFEDAVYWEVPGEEEDHHELNEVSTQNEVEKLNS). The segment at 440 to 459 (EDHHELNEVSTQNEVEKLNS) is disordered.

The protein belongs to the ammonium transporter (TC 2.A.49) family. Rh subfamily.

It localises to the basolateral cell membrane. The protein localises to the cytoplasmic vesicle membrane. Its function is as follows. Functions as an ammonia transporter. May play a role in the elimination of ammonia in the gill. The chain is Ammonium transporter Rh type B (rhbg) from Danio rerio (Zebrafish).